The sequence spans 627 residues: Lactose permease (627 aa).

Residues 1–460 (MKKKLVSRLS…AEIVDQLETQ (460 aa)) are permease. 12 helical membrane passes run 13 to 33 (AGAF…IVFV), 46 to 66 (IFII…LDPL), 84 to 104 (WVVG…TDFG), 111 to 131 (PVVY…FYSF), 159 to 179 (VGST…ILFF), 193 to 213 (WFFF…TVGL), 244 to 264 (LLWL…LNAL), 281 to 301 (LLYT…PSLA), 309 to 329 (LFYA…VASG), 336 to 356 (VGAE…LMII), 392 to 412 (WFVS…ASTI), and 419 to 439 (VFKL…VSIF). The region spanning 493–597 (DPVFADKKLG…DDTVIVTVIN (105 aa)) is the PTS EIIA type-1 domain. Histidine 545 carries the phosphohistidine; by HPr modification.

The protein in the N-terminal section; belongs to the sodium:galactoside symporter (TC 2.A.2) family.

The protein localises to the cell membrane. Functionally, responsible for transport of beta-galactosides into the cell, with the concomitant uptake of protons (symport system), and also for transport of homologous and heterologous exchange of beta-galactosides. This Lactobacillus delbrueckii subsp. bulgaricus (strain ATCC 11842 / DSM 20081 / BCRC 10696 / JCM 1002 / NBRC 13953 / NCIMB 11778 / NCTC 12712 / WDCM 00102 / Lb 14) protein is Lactose permease (lacY).